A 439-amino-acid polypeptide reads, in one-letter code: Ectonucleotide pyrophosphatase/phosphodiesterase family member 7 (439 aa).

A signal peptide spans 1 to 21 (MGHSAVLLSVALVILPACVTG). Over 22–422 (GPVQRQQQHK…RSGSPLSRQH (401 aa)) the chain is Extracellular. The Zn(2+) site is built by Asp38 and Thr74. The tract at residues 71-77 (VTMTSPC) is required for enzyme activity. Thr74 serves as the catalytic Nucleophile. Residue Asn95 participates in substrate binding. 4 N-linked (GlcNAc...) asparagine glycosylation sites follow: Asn99, Asn120, Asn145, and Asn167. Residues Asp198, His202, Asp245, and His246 each coordinate Zn(2+). N-linked (GlcNAc...) asparagine glycosylation is present at Asn266. His352 serves as a coordination point for Zn(2+). Residues 423 to 439 (HLVVVLMGILTGLAKVV) form a helical membrane-spanning segment.

It belongs to the nucleotide pyrophosphatase/phosphodiesterase family. The cofactor is Zn(2+). In terms of processing, N-glycosylated; required for activity and transport to the plasma membrane. As to expression, detected in small intestine (at protein level). Highly expressed in the jejunum.

It is found in the cell membrane. It catalyses the reaction a sphingomyelin + H2O = phosphocholine + an N-acylsphing-4-enine + H(+). It carries out the reaction a 1-O-alkyl-2-acetyl-sn-glycero-3-phosphocholine + H2O = a 1-O-alkyl-2-acetyl-sn-glycerol + phosphocholine + H(+). The catalysed reaction is 1-O-octadecyl-2-acetyl-sn-glycero-3-phosphocholine + H2O = 1-O-octadecyl-2-acetyl-sn-glycerol + phosphocholine + H(+). The enzyme catalyses 1-hexadecanoyl-sn-glycero-3-phosphocholine + H2O = 1-hexadecanoyl-sn-glycerol + phosphocholine + H(+). With respect to regulation, platelet-activating factor hydrolysis is inhibited by higher amount of sphingomyelin. The hydrolysis of platelet-activating factor and sphingomyelin can be inhibited by the presence of sphingomyelin and platelet-activating factor respectively, the inhibition of platelet-activating factor hydrolysis by sphingomyelin being stronger. PAF hydrolysis is dose-dependently increased by both taurocholate (TC) and taurodeoxycholate (TDC). Hydrolase activity against PAF is inhibited by EDTA and stimulated by 0.1-0.25 mM Zn2+. In terms of biological role, choline-specific phosphodiesterase that hydrolyzes sphingomyelin (SM) releasing the ceramide and phosphocholine and therefore is involved in sphingomyelin digestion, ceramide formation, and fatty acid (FA) absorption in the gastrointestinal tract. Also has phospholipase C activity and can also cleave phosphocholine from palmitoyl lyso-phosphatidylcholine and platelet-activating factor (PAF) leading to its inactivation. Does not have nucleotide pyrophosphatase activity. May promote cholesterol absorption by affecting the levels of sphingomyelin derived from either diet or endogenous sources, in the intestinal lumen. In Rattus norvegicus (Rat), this protein is Ectonucleotide pyrophosphatase/phosphodiesterase family member 7.